A 357-amino-acid polypeptide reads, in one-letter code: Phenylalanine--tRNA ligase alpha subunit (357 aa).

Glu-257 provides a ligand contact to Mg(2+).

This sequence belongs to the class-II aminoacyl-tRNA synthetase family. Phe-tRNA synthetase alpha subunit type 1 subfamily. In terms of assembly, tetramer of two alpha and two beta subunits. Mg(2+) is required as a cofactor.

The protein localises to the cytoplasm. The catalysed reaction is tRNA(Phe) + L-phenylalanine + ATP = L-phenylalanyl-tRNA(Phe) + AMP + diphosphate + H(+). This is Phenylalanine--tRNA ligase alpha subunit from Ruegeria sp. (strain TM1040) (Silicibacter sp.).